The following is an 88-amino-acid chain: U2-ctenitoxin-Pn1a (88 aa).

Positions 1 to 17 are cleaved as a signal peptide; the sequence is MKVAILILSILVLAVAS. Positions 18-34 are excised as a propeptide; that stretch reads ETIEEYRDDFAVEELER. 5 disulfides stabilise this stretch: cysteine 37–cysteine 51, cysteine 44–cysteine 57, cysteine 48–cysteine 86, cysteine 50–cysteine 71, and cysteine 59–cysteine 69. Lysine 88 is a propeptide.

Expressed by the venom gland.

Its subcellular location is the secreted. Its function is as follows. Inhibits voltage-gated sodium channels (Nav). Causes scratching, lacrimation, hypersalivation, sweating and agitation followed by spastic paralysis of the anterior and posterior extremities and death at dose levels of 1.62 mg/mouse. Insecticidal to the larval and adult forms of the house fly. This is U2-ctenitoxin-Pn1a from Phoneutria nigriventer (Brazilian armed spider).